We begin with the raw amino-acid sequence, 219 residues long: Redox-sensing transcriptional repressor Rex (219 aa).

Positions 17–56 (VYLRVLDNLVKRDIEVVSSKSLSKETGFTAEQIRKDLAFF) form a DNA-binding region, H-T-H motif. 91–96 (GAGHLG) contributes to the NAD(+) binding site.

Belongs to the transcriptional regulatory Rex family. As to quaternary structure, homodimer.

It localises to the cytoplasm. Modulates transcription in response to changes in cellular NADH/NAD(+) redox state. In Natranaerobius thermophilus (strain ATCC BAA-1301 / DSM 18059 / JW/NM-WN-LF), this protein is Redox-sensing transcriptional repressor Rex.